We begin with the raw amino-acid sequence, 20 residues long: Outer membrane protein 40Va (20 aa).

This sequence belongs to the Gram-negative porin family. As to quaternary structure, homotrimer.

It localises to the cell outer membrane. In terms of biological role, forms pores that allow passive diffusion of small molecules across the outer membrane. This Vibrio alginolyticus protein is Outer membrane protein 40Va.